We begin with the raw amino-acid sequence, 335 residues long: Phosphate acyltransferase (335 aa).

Belongs to the PlsX family. As to quaternary structure, homodimer. Probably interacts with PlsY.

The protein resides in the cytoplasm. The catalysed reaction is a fatty acyl-[ACP] + phosphate = an acyl phosphate + holo-[ACP]. The protein operates within lipid metabolism; phospholipid metabolism. Functionally, catalyzes the reversible formation of acyl-phosphate (acyl-PO(4)) from acyl-[acyl-carrier-protein] (acyl-ACP). This enzyme utilizes acyl-ACP as fatty acyl donor, but not acyl-CoA. The protein is Phosphate acyltransferase of Desulforudis audaxviator (strain MP104C).